Here is a 145-residue protein sequence, read N- to C-terminus: 3-dehydroquinate dehydratase (145 aa).

Y23 (proton acceptor) is an active-site residue. Positions 73, 79, and 86 each coordinate substrate. H99 (proton donor) is an active-site residue. Substrate-binding positions include 100-101 (LS) and R110.

It belongs to the type-II 3-dehydroquinase family. Homododecamer.

It carries out the reaction 3-dehydroquinate = 3-dehydroshikimate + H2O. It participates in metabolic intermediate biosynthesis; chorismate biosynthesis; chorismate from D-erythrose 4-phosphate and phosphoenolpyruvate: step 3/7. In terms of biological role, catalyzes a trans-dehydration via an enolate intermediate. The chain is 3-dehydroquinate dehydratase from Desulfitobacterium hafniense (strain Y51).